The chain runs to 217 residues: Small ribosomal subunit protein uS3 (217 aa).

The region spanning 38 to 106 (IRKFINKELA…QVHINIIEIK (69 aa)) is the KH type-2 domain.

This sequence belongs to the universal ribosomal protein uS3 family. As to quaternary structure, part of the 30S ribosomal subunit. Forms a tight complex with proteins S10 and S14.

Binds the lower part of the 30S subunit head. Binds mRNA in the 70S ribosome, positioning it for translation. The chain is Small ribosomal subunit protein uS3 from Streptococcus pyogenes serotype M6 (strain ATCC BAA-946 / MGAS10394).